We begin with the raw amino-acid sequence, 1649 residues long: eIF-2-alpha kinase GCN2 (1649 aa).

Disordered regions lie at residues 1–25, 138–158, and 227–256; these read MAGG…RQDH, NKPP…QEEQ, and HGGS…YSVC. The RWD domain occupies 25–137; that stretch reads HELQALEAIY…YHVQSFLSEH (113 aa). Residues 146-205 adopt a coiled-coil conformation; sequence HEEMLERRAQEEQQRLLEAKRKEEQEQREILHEIQRRKEEIKEEKKRKEMAKQERLEIAS. Position 230 is a phosphoserine (serine 230). Basic residues predominate over residues 237-249; the sequence is GKHRANSSGRSRR. Protein kinase domains follow at residues 296 to 539 and 590 to 1001; these read VYNA…HSFI and FEEL…SELL. Residues 596-604 and lysine 619 contribute to the ATP site; that span reads LGKGAFGAV. 2 disordered regions span residues 660 to 750 and 766 to 788; these read ERPA…QSFL and ENSK…ESEP. Threonine 667 carries the post-translational modification Phosphothreonine. Polar residues predominate over residues 705–717; the sequence is LSSSVEWSTSGER. Residues 731–740 show a composition bias toward acidic residues; sequence SDDEDDDEDE. Residues 778 to 787 show a composition bias toward basic and acidic residues; that stretch reads NEKNGCHESE. Residue aspartate 848 is the Proton acceptor of the active site. The residue at position 871 (threonine 871) is a Phosphothreonine. 2 positions are modified to phosphothreonine; by autocatalysis: threonine 899 and threonine 904. A histidyl-tRNA synthetase-like region spans residues 1022–1493; the sequence is VDGKAYRTMM…DHVLQKLRTK (472 aa). Lysine 1259 carries the N6-acetyllysine modification.

It belongs to the protein kinase superfamily. Ser/Thr protein kinase family. GCN2 subfamily. As to quaternary structure, homodimer; homodimerization is important for kinase activation by uncharged tRNAs. Interacts with GCN1; this interaction stimulates EIF2AK4/GCN2 kinase activity and is impaired by IMPACT upon a variety of stress conditions, such as amino acid depletion, UV-C irradiation, proteasome inhibitor treatment and glucose deprivation. Interacts with DNAJC3; this interaction inhibits EIF2AK4/GCN2 kinase activity during endoplasmic reticulum (ER), hypothermic and amino acid-starving stress conditions. Interacts with MAP3K20; activates EIF2AK4/GCN2 kinase activity in response to moderate ribotoxic stress. (Microbial infection) Interacts with hepatitis E virus (HEV) ORF1 protease; this interaction inhibits dimerization of EIF2AK4 and prevents EIF2AK4-mediated phosphorylation of EIF2A. In terms of processing, autophosphorylated; autophosphorylation on Thr-899 is increased upon amino acid starvation and in UV irradiation cells and inhibited in presence of IMPACT. As to expression, widely expressed. Expressed in lung, smooth muscle cells and macrophages.

The protein resides in the cytoplasm. It catalyses the reaction L-seryl-[protein] + ATP = O-phospho-L-seryl-[protein] + ADP + H(+). The enzyme catalyses L-threonyl-[protein] + ATP = O-phospho-L-threonyl-[protein] + ADP + H(+). In terms of biological role, metabolic-stress sensing protein kinase that phosphorylates the alpha subunit of eukaryotic translation initiation factor 2 (EIF2S1/eIF-2-alpha) in response to low amino acid availability. Plays a role as an activator of the integrated stress response (ISR) required for adaptation to amino acid starvation. EIF2S1/eIF-2-alpha phosphorylation in response to stress converts EIF2S1/eIF-2-alpha into a global protein synthesis inhibitor, leading to a global attenuation of cap-dependent translation, and thus to a reduced overall utilization of amino acids, while concomitantly initiating the preferential translation of ISR-specific mRNAs, such as the transcriptional activator ATF4, and hence allowing ATF4-mediated reprogramming of amino acid biosynthetic gene expression to alleviate nutrient depletion. Binds uncharged tRNAs. Required for the translational induction of protein kinase PRKCH following amino acid starvation. Involved in cell cycle arrest by promoting cyclin D1 mRNA translation repression after the unfolded protein response pathway (UPR) activation or cell cycle inhibitor CDKN1A/p21 mRNA translation activation in response to amino acid deprivation. Plays a role in the consolidation of synaptic plasticity, learning as well as formation of long-term memory. Plays a role in neurite outgrowth inhibition. Plays a proapoptotic role in response to glucose deprivation. Promotes global cellular protein synthesis repression in response to UV irradiation independently of the stress-activated protein kinase/c-Jun N-terminal kinase (SAPK/JNK) and p38 MAPK signaling pathways. Plays a role in the antiviral response against alphavirus infection; impairs early viral mRNA translation of the incoming genomic virus RNA, thus preventing alphavirus replication. Its function is as follows. (Microbial infection) Plays a role in modulating the adaptive immune response to yellow fever virus infection; promotes dendritic cells to initiate autophagy and antigene presentation to both CD4(+) and CD8(+) T-cells under amino acid starvation. This Homo sapiens (Human) protein is eIF-2-alpha kinase GCN2.